The sequence spans 843 residues: MSRPLSDQEKRKQISVRGLAGVENVTELKKNFNRHLHFTLVKDRNVATPRDYYFALAHTVRDHLVGRWIRTQQHYYEKDPKRIYYLSLEFYMGRTLQNTMVNLALENACDEATYQLGLDMEELEEIEEDAGLGNGGLGRLAACFLDSMATLGLAAYGYGIRYEFGIFNQKICGGWQMEEADDWLRYGNPWEKARPEFTLPVHFYGRVEHTSQGAKWVDTQVVLAMPYDTPVPGYRNNVVNTMRLWSAKAPNDFNLKDFNVGGYIQAVLDRNLAENISRVLYPNDNFFEGKELRLKQEYFVVAATLQDIIRRFKSSKFGCRDPVRTNFDAFPDKVAIQLNDTHPSLAIPELMRVLVDLERLDWDKAWEVTVKTCAYTNHTVLPEALERWPVHLLETLLPRHLQIIYEINQRFLNRVAAAFPGDVDRLRRMSLVEEGAVKRINMAHLCIAGSHAVNGVARIHSEILKKTIFKDFYELEPHKFQNKTNGITPRRWLVLCNPGLAEIIAERIGEEYISDLDQLRKLLSYVDDEAFIRDVAKVKQENKLKFAAYLEREYKVHINPNSLFDVQVKRIHEYKRQLLNCLHVITLYNRIKKEPNKFVVPRTVMIGGKAAPGYHMAKMIIKLITAIGDVVNHDPVVGDRLRVIFLENYRVSLAEKVIPAADLSEQISTAGTEASGTGNMKFMLNGALTIGTMDGANVEMAEEAGEENFFIFGMRVEDVDRLDQRGYNAQEYYDRIPELRQIIEQLSSGFFSPKQPDLFKDIVNMLMHHDRFKVFADYEEYVKCQERVSALYKNPREWTRMVIRNIATSGKFSSDRTIAQYAREIWGVEPSRQRLPAPDEKIP.

Serine 2 is subject to N-acetylserine. Serine 15 bears the Phosphoserine; by PHK; in form phosphorylase A mark. Residues aspartate 43 and tyrosine 76 each coordinate AMP. Residues tyrosine 204 and tyrosine 227 each carry the phosphotyrosine modification. 310-319 (RRFKSSKFGC) provides a ligand contact to AMP. The residue at position 430 (serine 430) is a Phosphoserine. Tyrosine 473 carries the post-translational modification Phosphotyrosine. Phosphoserine is present on serine 514. Lysine 681 carries the N6-(pyridoxal phosphate)lysine modification. A phosphoserine mark is found at serine 747 and serine 748.

It belongs to the glycogen phosphorylase family. As to quaternary structure, homodimer. Homotetramer; to form the enzymatically active phosphorylase A. It depends on pyridoxal 5'-phosphate as a cofactor. In terms of processing, phosphorylation of Ser-15 converts phosphorylase B (unphosphorylated) to phosphorylase A.

The catalysed reaction is [(1-&gt;4)-alpha-D-glucosyl](n) + phosphate = [(1-&gt;4)-alpha-D-glucosyl](n-1) + alpha-D-glucose 1-phosphate. Its activity is regulated as follows. Allosterically regulated through the non-covalent binding of metabolites, being activated by AMP and inhibited by ATP, ADP, and glucose-6-phosphate. The activity is also controlled by post-translational modifications including phosphorylation. Allosteric enzyme that catalyzes the rate-limiting step in glycogen catabolism, the phosphorolytic cleavage of glycogen to produce glucose-1-phosphate, and plays a central role in maintaining cellular and organismal glucose homeostasis. The sequence is that of Glycogen phosphorylase, muscle form from Oryctolagus cuniculus (Rabbit).